The chain runs to 702 residues: Threonine--tRNA ligase (702 aa).

Positions 1–30 (MSAPVHPVPGADGGDPLRPATPGLRSPQVP) are disordered. In terms of domain architecture, TGS spans 15-84 (DPLRPATPGL…DVDVEVTPVP (70 aa)). The catalytic stretch occupies residues 279–585 (DHRKLGIELD…LTEHYAGAFP (307 aa)). The Zn(2+) site is built by cysteine 384, histidine 435, and histidine 562.

The protein belongs to the class-II aminoacyl-tRNA synthetase family. Homodimer. It depends on Zn(2+) as a cofactor.

It localises to the cytoplasm. It carries out the reaction tRNA(Thr) + L-threonine + ATP = L-threonyl-tRNA(Thr) + AMP + diphosphate + H(+). Catalyzes the attachment of threonine to tRNA(Thr) in a two-step reaction: L-threonine is first activated by ATP to form Thr-AMP and then transferred to the acceptor end of tRNA(Thr). Also edits incorrectly charged L-seryl-tRNA(Thr). The polypeptide is Threonine--tRNA ligase (Mycobacterium leprae (strain Br4923)).